The primary structure comprises 396 residues: tRNA-specific 2-thiouridylase MnmA (396 aa).

Residues 35-42 and leucine 61 each bind ATP; that span reads GLSGGVDS. Cysteine 122 serves as the catalytic Nucleophile. Residues cysteine 122 and cysteine 221 are joined by a disulfide bond. An ATP-binding site is contributed by glycine 147. Residues 171–173 are interaction with tRNA; sequence KDQ. Cysteine 221 (cysteine persulfide intermediate) is an active-site residue. Positions 326–327 are interaction with tRNA; that stretch reads RY.

Belongs to the MnmA/TRMU family.

It localises to the cytoplasm. It carries out the reaction S-sulfanyl-L-cysteinyl-[protein] + uridine(34) in tRNA + AH2 + ATP = 2-thiouridine(34) in tRNA + L-cysteinyl-[protein] + A + AMP + diphosphate + H(+). Functionally, catalyzes the 2-thiolation of uridine at the wobble position (U34) of tRNA, leading to the formation of s(2)U34. The polypeptide is tRNA-specific 2-thiouridylase MnmA (Parasynechococcus marenigrum (strain WH8102)).